Here is a 178-residue protein sequence, read N- to C-terminus: Large ribosomal subunit protein uL6 (178 aa).

This sequence belongs to the universal ribosomal protein uL6 family. Part of the 50S ribosomal subunit.

In terms of biological role, this protein binds to the 23S rRNA, and is important in its secondary structure. It is located near the subunit interface in the base of the L7/L12 stalk, and near the tRNA binding site of the peptidyltransferase center. In Streptococcus gordonii (strain Challis / ATCC 35105 / BCRC 15272 / CH1 / DL1 / V288), this protein is Large ribosomal subunit protein uL6.